Consider the following 327-residue polypeptide: Small ribosomal subunit protein RACK1 (327 aa).

WD repeat units lie at residues 13 to 44 (AHTD…IVWK), 61 to 91 (GHSH…RLWD), 103 to 133 (GHTK…KLWN), 148 to 180 (GHRD…KVWN), 192 to 222 (GHTG…LLWD), 233 to 262 (EANS…KIWD), and 293 to 323 (RKVI…RVWG).

This sequence belongs to the WD repeat G protein beta family. Ribosomal protein RACK1 subfamily.

The protein is Small ribosomal subunit protein RACK1 (GB1) of Brassica napus (Rape).